The following is a 523-amino-acid chain: 2-isopropylmalate synthase (523 aa).

The Pyruvate carboxyltransferase domain occupies 5-267 (VIIFDTTLRD…ETGINAKEIH (263 aa)). Mn(2+) contacts are provided by Asp14, His202, His204, and Asn238. The segment at 392–523 (KLQQLVVHSD…QQNKRELGGV (132 aa)) is regulatory domain.

Belongs to the alpha-IPM synthase/homocitrate synthase family. LeuA type 1 subfamily. As to quaternary structure, homodimer. Mn(2+) serves as cofactor.

Its subcellular location is the cytoplasm. The enzyme catalyses 3-methyl-2-oxobutanoate + acetyl-CoA + H2O = (2S)-2-isopropylmalate + CoA + H(+). Its pathway is amino-acid biosynthesis; L-leucine biosynthesis; L-leucine from 3-methyl-2-oxobutanoate: step 1/4. Catalyzes the condensation of the acetyl group of acetyl-CoA with 3-methyl-2-oxobutanoate (2-ketoisovalerate) to form 3-carboxy-3-hydroxy-4-methylpentanoate (2-isopropylmalate). The polypeptide is 2-isopropylmalate synthase (Shewanella pealeana (strain ATCC 700345 / ANG-SQ1)).